Reading from the N-terminus, the 751-residue chain is Protein WEAK CHLOROPLAST MOVEMENT UNDER BLUE LIGHT-like 3 (751 aa).

The residue at position 113 (Ser113) is a Phosphoserine. Coiled-coil stretches lie at residues 165–558 (ERRK…ALQE) and 588–647 (QALE…KARD). Basic and acidic residues-rich tracts occupy residues 455–467 (RERQDLEETKQKE) and 625–689 (NREM…RNKE). 2 disordered regions span residues 455–479 (RERQDLEETKQKESTGLARTNDKDA) and 625–751 (NREM…HSHK). A compositionally biased stretch (low complexity) spans 704-723 (GSSSNNTGGSTTTNNNNLTP).

It belongs to the WEB family.

The chain is Protein WEAK CHLOROPLAST MOVEMENT UNDER BLUE LIGHT-like 3 (WEL3) from Arabidopsis thaliana (Mouse-ear cress).